We begin with the raw amino-acid sequence, 127 residues long: Mitochondrial pyruvate carrier 2 (127 aa).

The Mitochondrial matrix segment spans residues 2–40; it reads AAAGARGLRATYHRLMDKVELLLPKKLRPLYNHPAGPRT. An N6-acetyllysine modification is found at K26. The chain crosses the membrane as a helical span at residues 41 to 61; it reads VFFWAPIMKWGLVCAGLADMA. Residues 62–72 lie on the Mitochondrial intermembrane side of the membrane; the sequence is RPAEKLSTAQS. Residues 73 to 90 form a helical membrane-spanning segment; sequence TVLMATGFIWSRYSLVII. Topologically, residues 91–92 are mitochondrial matrix; that stretch reads PK. The helical transmembrane segment at 93–115 threads the bilayer; that stretch reads NWSLFAVNFFVGSAGASQLFRIW. At 116–127 the chain is on the mitochondrial intermembrane side; that stretch reads RYNQELKSKGIQ.

The protein belongs to the mitochondrial pyruvate carrier (MPC) (TC 2.A.105) family. In terms of assembly, homodimer. Homooligomer. Forms heterodimers with MPC1 and MPC1L. The heterodimer is the more stable and dominant form.

The protein localises to the mitochondrion inner membrane. It catalyses the reaction pyruvate(out) + H(+)(out) = pyruvate(in) + H(+)(in). Functionally, mediates the uptake of pyruvate into mitochondria. The chain is Mitochondrial pyruvate carrier 2 (Mpc2) from Mus musculus (Mouse).